An 849-amino-acid polypeptide reads, in one-letter code: Membrane protein-large ribosomal subunit bL9 fusion protein (849 aa).

A unknown region spans residues 1-680 (MFSKNKHNTK…TQLEGTNIKT (680 aa)). Helical transmembrane passes span 11–31 (FIVI…FDFQ) and 64–84 (IIFF…IISF). The GGDEF domain maps to 214-342 (KTLAIAMIAF…GGDQVVVNIE (129 aa)). A large ribosomal subunit protein bL9 region spans residues 681 to 849 (VTDTLKHFLK…FLNVTERKSK (169 aa)).

It belongs to the bacterial ribosomal protein bL9 family.

The protein localises to the cell membrane. In terms of biological role, binds to the 23S rRNA. The sequence is that of Membrane protein-large ribosomal subunit bL9 fusion protein from Aster yellows witches'-broom phytoplasma (strain AYWB).